The sequence spans 89 residues: Putative sodium channel toxin Ts30 (89 aa).

The first 17 residues, 1-17, serve as a signal peptide directing secretion; the sequence is MFKLAIILALLFFGARA. In terms of domain architecture, LCN-type CS-alpha/beta spans 21 to 85; the sequence is RDGYPILSDG…FGDSGTPECH (65 aa). 4 disulfides stabilise this stretch: C31/C84, C35/C59, C44/C64, and C48/C66.

As to expression, expressed by the venom gland.

The protein localises to the secreted. The chain is Putative sodium channel toxin Ts30 from Tityus serrulatus (Brazilian scorpion).